The following is a 579-amino-acid chain: Golvesin (579 aa).

Positions 1–75 (MTSVNEHSLL…NNNNNNNNNN (75 aa)) are required for targeting to the plasma membrane. A disordered region spans residues 1–79 (MTSVNEHSLL…NNNNNNSNTG (79 aa)). The Lumenal portion of the chain corresponds to 1 to 94 (MTSVNEHSLL…KKKKWNFRKK (94 aa)). Low complexity predominate over residues 11 to 77 (INNNENNDNN…NNNNNNNNSN (67 aa)). A helical; Signal-anchor for type III membrane protein transmembrane segment spans residues 95 to 115 (ILPMIVILIITAIVVCLVVFS). The tract at residues 95-118 (ILPMIVILIITAIVVCLVVFSLPF) is required for membrane targeting. Residues 116 to 578 (LPFDSSNTIY…SNDFVIAESP (463 aa)) are Cytoplasmic-facing. The segment at 559–579 (WPSSKGIPGFSNDFVIAESPE) is required for transfer to endosomes and contractile vacuoles; the protein is trapped in the Golgi.

The protein localises to the contractile vacuole membrane. Its subcellular location is the endosome membrane. It localises to the golgi apparatus membrane. This is Golvesin (gol) from Dictyostelium discoideum (Social amoeba).